Reading from the N-terminus, the 72-residue chain is Heat-stable enterotoxin A3/A4 (72 aa).

Positions 1-19 are cleaved as a signal peptide; it reads MKKSILFIFLSVLSFSPFA. Positions 20-53 are excised as a propeptide; the sequence is QDAKPVESSKEKITLESKKCNIAKKSNKSGPESM. Cystine bridges form between Cys-59/Cys-64, Cys-60/Cys-68, and Cys-63/Cys-71.

Belongs to the heat-stable enterotoxin family.

The protein localises to the secreted. Functionally, toxin which activates the particulate form of guanylate cyclase and increases cyclic GMP levels within the host intestinal epithelial cells. The chain is Heat-stable enterotoxin A3/A4 (sta3) from Escherichia coli.